The chain runs to 181 residues: Caltractin ICL1a (181 aa).

The tract at residues 1-29 (MARRGQQPPPQQAPPAQKNQPGKFNPAEF) is disordered. Over residues 14–23 (PPAQKNQPGK) the composition is skewed to low complexity. EF-hand domains are found at residues 37-72 (EEVLEIKEAFDLFDTDGTQSIDPKELKAAMTSLGFE), 73-108 (AKNQTIYQMISDLDTDGSGQIDFAEFLKLMTARISE), 110-145 (DSKADIQKVFNLFDSERAGVVTLKDLRKVAKELGET), and 146-181 (MDDSELQEMIDRADSDGDAQVTFEDFYNIMTKKTFA). Positions 50, 52, 54, 56, 61, 86, 88, 90, 92, and 97 each coordinate Ca(2+).

The protein belongs to the centrin family. In terms of assembly, monomer.

It is found in the cytoplasm. The protein resides in the cytoskeleton. Its function is as follows. Plays a fundamental role in microtubule organizing center structure and function. Component of the infraciliary lattice (ICL) and the ciliary basal bodies. This is Caltractin ICL1a (Icl1a) from Paramecium tetraurelia.